Reading from the N-terminus, the 145-residue chain is MTKPTEEELKQTLTDLQYAVTQENATERPFSGEYDDFYQDGIYVDIVSGEPLFSSLDKYDAGCGWPSFTKPIEKRGVKEKADFSHGMHRVEVRSQEADSHLGHVFTDGPLQEGGLRYCINAAALRFVPVADLEKEGYGEYLSLFK.

Residues 6–129 (EEELKQTLTD…NAAALRFVPV (124 aa)) enclose the MsrB domain. The active-site Nucleophile is the cysteine 118.

This sequence belongs to the MsrB Met sulfoxide reductase family.

It carries out the reaction L-methionyl-[protein] + [thioredoxin]-disulfide + H2O = L-methionyl-(R)-S-oxide-[protein] + [thioredoxin]-dithiol. In Enterococcus faecalis (strain ATCC 700802 / V583), this protein is Peptide methionine sulfoxide reductase MsrB.